Reading from the N-terminus, the 593-residue chain is Pentatricopeptide repeat-containing protein At5g24830 (593 aa).

12 PPR repeats span residues 120–154 (CLSI…GVIP), 155–189 (GLIT…GPSP), 190–224 (NCVS…GIRP), 225–256 (NRVT…ILDS), 264–298 (DIVI…NVPA), 299–333 (DSVV…GVNP), 334–368 (DVFT…GVAP), 369–403 (DQIS…SLLP), 404–438 (EVLL…GVKP), 439–473 (NVYT…KIHP), 474–508 (DTTT…GCQP), and 509–543 (DIIT…GITI).

It belongs to the PPR family. P subfamily.

This Arabidopsis thaliana (Mouse-ear cress) protein is Pentatricopeptide repeat-containing protein At5g24830.